A 325-amino-acid polypeptide reads, in one-letter code: Protease HtpX homolog (325 aa).

Residues 20 to 40 (IGYLLGGGGGMMIALVIAVAM) traverse the membrane as a helical segment. His-130 provides a ligand contact to Zn(2+). The active site involves Glu-131. Residue His-134 coordinates Zn(2+). Transmembrane regions (helical) follow at residues 145–165 (IVAT…FLGG) and 173–193 (VMGV…AMIV). Glu-202 is a Zn(2+) binding site. Residues 288–325 (AMTARAAAPSQNSGPWGQRSDNAGGNSNGGSRYRGPWS) form a disordered region. A compositionally biased stretch (low complexity) spans 306-325 (RSDNAGGNSNGGSRYRGPWS).

Belongs to the peptidase M48B family. Requires Zn(2+) as cofactor.

The protein resides in the cell inner membrane. The chain is Protease HtpX homolog from Brucella abortus (strain S19).